An 864-amino-acid polypeptide reads, in one-letter code: Alanine--tRNA ligase (864 aa).

The Zn(2+) site is built by histidine 534, histidine 538, cysteine 639, and histidine 643.

It belongs to the class-II aminoacyl-tRNA synthetase family. It depends on Zn(2+) as a cofactor.

Its subcellular location is the cytoplasm. The catalysed reaction is tRNA(Ala) + L-alanine + ATP = L-alanyl-tRNA(Ala) + AMP + diphosphate. In terms of biological role, catalyzes the attachment of alanine to tRNA(Ala) in a two-step reaction: alanine is first activated by ATP to form Ala-AMP and then transferred to the acceptor end of tRNA(Ala). Also edits incorrectly charged Ser-tRNA(Ala) and Gly-tRNA(Ala) via its editing domain. This chain is Alanine--tRNA ligase, found in Onion yellows phytoplasma (strain OY-M).